A 219-amino-acid polypeptide reads, in one-letter code: Large ribosomal subunit protein uL4c (219 aa).

Residues 53 to 81 (REHTASTKTKSQVRGGGKKPWKQKGTGRA) are disordered. The span at 68-79 (GGKKPWKQKGTG) shows a compositional bias: basic residues.

Belongs to the universal ribosomal protein uL4 family. In terms of assembly, part of the 50S ribosomal subunit.

Its subcellular location is the plastid. It is found in the chloroplast. Functionally, probably binds the 23S rRNA. The protein is Large ribosomal subunit protein uL4c (rpl4) of Cyanidium caldarium (Red alga).